Consider the following 231-residue polypeptide: Large ribosomal subunit protein uL1 (231 aa).

This sequence belongs to the universal ribosomal protein uL1 family. In terms of assembly, part of the 50S ribosomal subunit.

In terms of biological role, binds directly to 23S rRNA. The L1 stalk is quite mobile in the ribosome, and is involved in E site tRNA release. Its function is as follows. Protein L1 is also a translational repressor protein, it controls the translation of the L11 operon by binding to its mRNA. In Hydrogenovibrio crunogenus (strain DSM 25203 / XCL-2) (Thiomicrospira crunogena), this protein is Large ribosomal subunit protein uL1.